Consider the following 182-residue polypeptide: Peptidoglycan recognition protein 1 (182 aa).

Residues 1-18 form the signal peptide; it reads MLFACALLALLGLATSCS. 3 disulfides stabilise this stretch: Cys-17–Cys-141, Cys-33–Cys-78, and Cys-54–Cys-60. The region spanning 39-167 is the N-acetylmuramoyl-L-alanine amidase domain; that stretch reads HPVRYVVISH…RDVQSTLSPG (129 aa).

This sequence belongs to the N-acetylmuramoyl-L-alanine amidase 2 family. In terms of assembly, homodimer; disulfide-linked. Interacts with HSPA1A; this interaction forms a cytotoxic complex that is released by lymphokine-activated killer cells. Interacts with HSPBP1; this interaction blocks the cytotoxic activity of the PGLYRP1-HSPA1A complex. As to expression, strongly expressed in spleen and lung. Also detected in brain and thymus. In the lung, expressed in the intraalveolar space, in the brain, expressed in the Purkinje cells of the cerebellum and in certain layers of neurons in the hippocampus. Also detected in cells filling the space within the intestinal villus.

It is found in the cytoplasm. The protein resides in the secreted. Innate immunity protein that plays several important functions in antimicrobial and antitumor defense systems. Acts as a pattern receptor that binds to murein peptidoglycans (PGN) of Gram-positive bacteria and thus provides bactericidal activity. Forms an equimolar complex with heat shock protein HSPA1A and induces programmed cell death through apoptosis and necroptosis in tumor cell lines by activating the TNFR1 receptor on the target cell membrane. In addition, acts in complex with the Ca(2+)-binding protein S100A4 as a chemoattractant able to induce lymphocyte movement. Mechanistically, this complex acts as a ligand of the chemotactic receptors CCR5 and CXCR3 which are present on the cells of the immune system. Also promotes the activation of lymphocytes that become able to kill virus-infected cells as well as tumor cells by modulating the spectrum of their target-cell specificity. Induction of cytotoxicity on monocyte surface requires interaction with TREM1 receptor. This is Peptidoglycan recognition protein 1 (Pglyrp1) from Mus musculus (Mouse).